The chain runs to 463 residues: Exodeoxyribonuclease 7 large subunit (463 aa).

This sequence belongs to the XseA family. As to quaternary structure, heterooligomer composed of large and small subunits.

The protein resides in the cytoplasm. The enzyme catalyses Exonucleolytic cleavage in either 5'- to 3'- or 3'- to 5'-direction to yield nucleoside 5'-phosphates.. Its function is as follows. Bidirectionally degrades single-stranded DNA into large acid-insoluble oligonucleotides, which are then degraded further into small acid-soluble oligonucleotides. The chain is Exodeoxyribonuclease 7 large subunit from Bordetella pertussis (strain Tohama I / ATCC BAA-589 / NCTC 13251).